A 100-amino-acid polypeptide reads, in one-letter code: Small ribosomal subunit protein uS17 (100 aa).

Belongs to the universal ribosomal protein uS17 family. In terms of assembly, part of the 30S ribosomal subunit.

Functionally, one of the primary rRNA binding proteins, it binds specifically to the 5'-end of 16S ribosomal RNA. The polypeptide is Small ribosomal subunit protein uS17 (Erythrobacter litoralis (strain HTCC2594)).